A 284-amino-acid polypeptide reads, in one-letter code: MQQKTIKLGNLEIANDKPFTLFGGMNVLESRDMAMAVCEKYVEVTNKLGVPYVFKASFDKANRSSIHSYRGPGMEEGLKIFQELKDTFGVKIITDVHEIYQCKPVAEVVDIIQLPAFLARQTDLVEAMARTGAVINVKKPQFLSPGQMGNIVEKIEECGNDQVILCDRGTNFGYDNLVVDMLGFSVMKQVSKGCPVIFDVTHSLQCRDPFGAASSGRRAQVTELARAGLAVGIAGLFLEAHPDPNNAKCDGPSALPLSTLEAFVGQMKAIDDLVKSFPEIDTSK.

Belongs to the KdsA family.

It localises to the cytoplasm. It catalyses the reaction D-arabinose 5-phosphate + phosphoenolpyruvate + H2O = 3-deoxy-alpha-D-manno-2-octulosonate-8-phosphate + phosphate. It participates in carbohydrate biosynthesis; 3-deoxy-D-manno-octulosonate biosynthesis; 3-deoxy-D-manno-octulosonate from D-ribulose 5-phosphate: step 2/3. Its pathway is bacterial outer membrane biogenesis; lipopolysaccharide biosynthesis. The polypeptide is 2-dehydro-3-deoxyphosphooctonate aldolase (kdsA) (Mannheimia haemolytica (Pasteurella haemolytica)).